The following is a 60-amino-acid chain: Mastoparan-V (60 aa).

Residues 1-27 (MKNTILILFTAFIALLGFFGMSAEALA) form the signal peptide. 4 AXPX repeats span residues 27–30 (ADPV), 31–34 (ADPL), 35–38 (AGPN), and 41–44 (ADPE). Positions 28–45 (DPVADPLAGPNAEADPEA) are excised as a propeptide. L59 bears the Leucine amide mark.

The protein belongs to the MCD family. Mastoparan subfamily. In terms of tissue distribution, expressed by the venom gland.

The protein resides in the secreted. It localises to the target cell membrane. Functionally, antimicrobial and mast cell degranulating peptide. Has broad spectrum antibacterial activity against both Gram-positive and Gram-negative bacteria (S.aureus MIC=32-64 ug/ml, S.xylosus MIC=3 ug/ml, S.alactolyticus MIC=16 ug/ml, C.koseri MIC=4 ug/ml, E.coli MIC=8 ug/ml, K.pneumoniae MIC=64 ug/ml, P.aerugiosa MIC=256 ug/ml, S.choleraesuis MIC=32 ug/ml, S.typhimurium MIC=32 ug/ml, V.parahamelytics MIC=32 ug/ml). Affects membrane permeability of E.coli. Shows hemolytic activities on sheep, chicken and human erythrocytes. Its mast cell degranulation activity may be related to the activation of G-protein coupled receptors in mast cells as well as interaction with other proteins located in cell endosomal membranes in the mast cells. The polypeptide is Mastoparan-V (Vespa velutina flavitarsus (Asian hornet)).